We begin with the raw amino-acid sequence, 353 residues long: Photosystem II protein D1 (353 aa).

Thr-2 carries the N-acetylthreonine modification. Residue Thr-2 is modified to Phosphothreonine. The next 3 membrane-spanning stretches (helical) occupy residues Tyr-29–Ser-46, His-118–Leu-133, and Trp-142–Ala-156. His-118 contacts chlorophyll a. Tyr-126 provides a ligand contact to pheophytin a. [CaMn4O5] cluster contacts are provided by Asp-170 and Glu-189. A helical transmembrane segment spans residues Phe-197–Leu-218. His-198 is a chlorophyll a binding site. A quinone-binding positions include His-215 and Ser-264–Phe-265. His-215 is a Fe cation binding site. A Fe cation-binding site is contributed by His-272. A helical membrane pass occupies residues Phe-274 to Leu-288. The [CaMn4O5] cluster site is built by His-332, Glu-333, Asp-342, and Ala-344. Residues Ala-345–Gly-353 constitute a propeptide that is removed on maturation.

It belongs to the reaction center PufL/M/PsbA/D family. PSII is composed of 1 copy each of membrane proteins PsbA, PsbB, PsbC, PsbD, PsbE, PsbF, PsbH, PsbI, PsbJ, PsbK, PsbL, PsbM, PsbT, PsbX, PsbY, PsbZ, Psb30/Ycf12, at least 3 peripheral proteins of the oxygen-evolving complex and a large number of cofactors. It forms dimeric complexes. Requires The D1/D2 heterodimer binds P680, chlorophylls that are the primary electron donor of PSII, and subsequent electron acceptors. It shares a non-heme iron and each subunit binds pheophytin, quinone, additional chlorophylls, carotenoids and lipids. D1 provides most of the ligands for the Mn4-Ca-O5 cluster of the oxygen-evolving complex (OEC). There is also a Cl(-1) ion associated with D1 and D2, which is required for oxygen evolution. The PSII complex binds additional chlorophylls, carotenoids and specific lipids. as cofactor. In terms of processing, tyr-161 forms a radical intermediate that is referred to as redox-active TyrZ, YZ or Y-Z. C-terminally processed by CTPA; processing is essential to allow assembly of the oxygen-evolving complex and thus photosynthetic growth.

The protein localises to the plastid. It localises to the chloroplast thylakoid membrane. It carries out the reaction 2 a plastoquinone + 4 hnu + 2 H2O = 2 a plastoquinol + O2. Functionally, photosystem II (PSII) is a light-driven water:plastoquinone oxidoreductase that uses light energy to abstract electrons from H(2)O, generating O(2) and a proton gradient subsequently used for ATP formation. It consists of a core antenna complex that captures photons, and an electron transfer chain that converts photonic excitation into a charge separation. The D1/D2 (PsbA/PsbD) reaction center heterodimer binds P680, the primary electron donor of PSII as well as several subsequent electron acceptors. The polypeptide is Photosystem II protein D1 (Medicago sativa (Alfalfa)).